The following is a 152-amino-acid chain: Protein Smg homolog (152 aa).

This sequence belongs to the Smg family.

The protein is Protein Smg homolog of Bordetella bronchiseptica (strain ATCC BAA-588 / NCTC 13252 / RB50) (Alcaligenes bronchisepticus).